A 334-amino-acid chain; its full sequence is GTP 3',8-cyclase (334 aa).

The Radical SAM core domain maps to 13 to 239; sequence KFHRKFYYLR…KVRSHHDGPA (227 aa). Position 22 (Arg22) interacts with GTP. [4Fe-4S] cluster is bound by residues Cys29 and Cys33. Tyr35 provides a ligand contact to S-adenosyl-L-methionine. Cys36 lines the [4Fe-4S] cluster pocket. GTP is bound at residue Arg73. S-adenosyl-L-methionine is bound at residue Gly77. Thr104 is a GTP binding site. Ser128 contributes to the S-adenosyl-L-methionine binding site. Position 165 (Lys165) interacts with GTP. Met199 serves as a coordination point for S-adenosyl-L-methionine. Cys262 and Cys265 together coordinate [4Fe-4S] cluster. GTP is bound at residue 267–269; the sequence is RLR. Residue Cys279 participates in [4Fe-4S] cluster binding.

Belongs to the radical SAM superfamily. MoaA family. Monomer and homodimer. [4Fe-4S] cluster is required as a cofactor.

It carries out the reaction GTP + AH2 + S-adenosyl-L-methionine = (8S)-3',8-cyclo-7,8-dihydroguanosine 5'-triphosphate + 5'-deoxyadenosine + L-methionine + A + H(+). It functions in the pathway cofactor biosynthesis; molybdopterin biosynthesis. Its function is as follows. Catalyzes the cyclization of GTP to (8S)-3',8-cyclo-7,8-dihydroguanosine 5'-triphosphate. This is GTP 3',8-cyclase from Vibrio parahaemolyticus serotype O3:K6 (strain RIMD 2210633).